Reading from the N-terminus, the 63-residue chain is Jingdongin-1-MT1 (63 aa).

The first 22 residues, 1 to 22, serve as a signal peptide directing secretion; it reads MFTLKKSLLLLFFLGTINLSLC. Residues 23–44 constitute a propeptide, removed in mature form; that stretch reads EQERDADEEERRDDDEMDVEVE. Cys57 and Cys63 are joined by a disulfide.

It belongs to the frog skin active peptide (FSAP) family. Brevinin subfamily. In terms of tissue distribution, expressed by the skin glands.

The protein localises to the secreted. In terms of biological role, antimicrobial peptide. Active against some Gram-negative and a variety of Gram-positive bacterial strains. Active against fungus C.glabrata 090902 but not against C.neoformans 201211. Shows hemolytic activity against human erythrocytes. This Amolops mantzorum (Sichuan torrent frog) protein is Jingdongin-1-MT1.